A 717-amino-acid polypeptide reads, in one-letter code: DNA-binding protein RFX2 (717 aa).

A disordered region spans residues 1-28 (MQNSEGGADSPASVALRPAAQPMPASPQ). Ser-26 bears the Phosphoserine mark. The segment at residues 194 to 269 (HLQWLLDNYE…YHYYGIRLKP (76 aa)) is a DNA-binding region (RFX-type winged-helix). Positions 286–318 (RQQPTHQKPRYRPAQKSDSLGDGSAHSNMHGMP) are disordered. Phosphoserine is present on Ser-411. The segment covering 685–710 (DGHSSEADVDGRSLGEPLVKRERSDP) has biased composition (basic and acidic residues). The tract at residues 685-717 (DGHSSEADVDGRSLGEPLVKRERSDPSHPLQGI) is disordered.

It belongs to the RFX family. Homodimer; probably only forms homodimers in testis. Heterodimer; heterodimerizes with RFX1 and RFX3.

The protein localises to the nucleus. It is found in the cytoplasm. Functionally, transcription factor that acts as a key regulator of spermatogenesis. Acts by regulating expression of genes required for the haploid phase during spermiogenesis, such as genes required for cilium assembly and function. Recognizes and binds the X-box, a regulatory motif with DNA sequence 5'-GTNRCC(0-3N)RGYAAC-3' present on promoters. Probably activates transcription of the testis-specific histone gene H1-6. The polypeptide is DNA-binding protein RFX2 (Rfx2) (Mus musculus (Mouse)).